The primary structure comprises 84 residues: Cell division topological specificity factor (84 aa).

Belongs to the MinE family.

Its function is as follows. Prevents the cell division inhibition by proteins MinC and MinD at internal division sites while permitting inhibition at polar sites. This ensures cell division at the proper site by restricting the formation of a division septum at the midpoint of the long axis of the cell. This Burkholderia cenocepacia (strain ATCC BAA-245 / DSM 16553 / LMG 16656 / NCTC 13227 / J2315 / CF5610) (Burkholderia cepacia (strain J2315)) protein is Cell division topological specificity factor.